Consider the following 563-residue polypeptide: Arginine--tRNA ligase (563 aa).

The 'HIGH' region signature appears at 121–131; sequence PNIAKPFSIGH.

It belongs to the class-I aminoacyl-tRNA synthetase family. Monomer.

It is found in the cytoplasm. It carries out the reaction tRNA(Arg) + L-arginine + ATP = L-arginyl-tRNA(Arg) + AMP + diphosphate. This is Arginine--tRNA ligase from Streptococcus pneumoniae serotype 19F (strain G54).